The primary structure comprises 383 residues: Chaperone protein DnaJ (383 aa).

The J domain maps to 5–70 (DYYEALGVAR…QKRAAYDQFG (66 aa)). The CR-type zinc-finger motif lies at 139-217 (GTEVQIRVPT…CGGRGRVQSQ (79 aa)). Zn(2+)-binding residues include cysteine 152, cysteine 155, cysteine 169, cysteine 172, cysteine 191, cysteine 194, cysteine 205, and cysteine 208. 4 CXXCXGXG motif repeats span residues 152-159 (CDACDGKG), 169-176 (CPTCKGHG), 191-198 (CPRCGGSG), and 205-212 (CRKCGGRG). Positions 230-249 (TGDRIRLSGEGEPGENGGPP) are disordered.

This sequence belongs to the DnaJ family. As to quaternary structure, homodimer. Zn(2+) serves as cofactor.

Its subcellular location is the cytoplasm. In terms of biological role, participates actively in the response to hyperosmotic and heat shock by preventing the aggregation of stress-denatured proteins and by disaggregating proteins, also in an autonomous, DnaK-independent fashion. Unfolded proteins bind initially to DnaJ; upon interaction with the DnaJ-bound protein, DnaK hydrolyzes its bound ATP, resulting in the formation of a stable complex. GrpE releases ADP from DnaK; ATP binding to DnaK triggers the release of the substrate protein, thus completing the reaction cycle. Several rounds of ATP-dependent interactions between DnaJ, DnaK and GrpE are required for fully efficient folding. Also involved, together with DnaK and GrpE, in the DNA replication of plasmids through activation of initiation proteins. The protein is Chaperone protein DnaJ of Alkalilimnicola ehrlichii (strain ATCC BAA-1101 / DSM 17681 / MLHE-1).